Reading from the N-terminus, the 348-residue chain is NADH-quinone oxidoreductase subunit H (348 aa).

The next 8 membrane-spanning stretches (helical) occupy residues 10–30 (LPLF…LVLI), 82–102 (GVFL…WAVV), 115–135 (VGLL…IMGG), 161–181 (IGFV…TTIV), 199–219 (LLDW…ISAL), 251–271 (LFFL…TILF), 287–307 (VPGV…FAMV), and 322–342 (LGWK…AAIL).

It belongs to the complex I subunit 1 family. As to quaternary structure, NDH-1 is composed of 14 different subunits. Subunits NuoA, H, J, K, L, M, N constitute the membrane sector of the complex.

It localises to the cell inner membrane. The enzyme catalyses a quinone + NADH + 5 H(+)(in) = a quinol + NAD(+) + 4 H(+)(out). In terms of biological role, NDH-1 shuttles electrons from NADH, via FMN and iron-sulfur (Fe-S) centers, to quinones in the respiratory chain. The immediate electron acceptor for the enzyme in this species is believed to be ubiquinone. Couples the redox reaction to proton translocation (for every two electrons transferred, four hydrogen ions are translocated across the cytoplasmic membrane), and thus conserves the redox energy in a proton gradient. This subunit may bind ubiquinone. This Bartonella bacilliformis (strain ATCC 35685 / KC583 / Herrer 020/F12,63) protein is NADH-quinone oxidoreductase subunit H.